The sequence spans 513 residues: ATP synthase subunit alpha (513 aa).

Residue 169-176 (GDRQTGKT) participates in ATP binding.

This sequence belongs to the ATPase alpha/beta chains family. As to quaternary structure, F-type ATPases have 2 components, CF(1) - the catalytic core - and CF(0) - the membrane proton channel. CF(1) has five subunits: alpha(3), beta(3), gamma(1), delta(1), epsilon(1). CF(0) has three main subunits: a(1), b(2) and c(9-12). The alpha and beta chains form an alternating ring which encloses part of the gamma chain. CF(1) is attached to CF(0) by a central stalk formed by the gamma and epsilon chains, while a peripheral stalk is formed by the delta and b chains.

The protein localises to the cell inner membrane. The catalysed reaction is ATP + H2O + 4 H(+)(in) = ADP + phosphate + 5 H(+)(out). Functionally, produces ATP from ADP in the presence of a proton gradient across the membrane. The alpha chain is a regulatory subunit. In Haemophilus influenzae (strain 86-028NP), this protein is ATP synthase subunit alpha.